A 197-amino-acid chain; its full sequence is Imidazoleglycerol-phosphate dehydratase (197 aa).

The protein belongs to the imidazoleglycerol-phosphate dehydratase family.

It is found in the cytoplasm. It catalyses the reaction D-erythro-1-(imidazol-4-yl)glycerol 3-phosphate = 3-(imidazol-4-yl)-2-oxopropyl phosphate + H2O. It functions in the pathway amino-acid biosynthesis; L-histidine biosynthesis; L-histidine from 5-phospho-alpha-D-ribose 1-diphosphate: step 6/9. This is Imidazoleglycerol-phosphate dehydratase from Bradyrhizobium diazoefficiens (strain JCM 10833 / BCRC 13528 / IAM 13628 / NBRC 14792 / USDA 110).